Consider the following 343-residue polypeptide: Methylthioribose-1-phosphate isomerase (343 aa).

Residues R48–A50, R88, and Q193 contribute to the substrate site. D234 acts as the Proton donor in catalysis. Substrate is bound at residue N244 to K245.

This sequence belongs to the eIF-2B alpha/beta/delta subunits family. MtnA subfamily.

It carries out the reaction 5-(methylsulfanyl)-alpha-D-ribose 1-phosphate = 5-(methylsulfanyl)-D-ribulose 1-phosphate. The protein operates within amino-acid biosynthesis; L-methionine biosynthesis via salvage pathway; L-methionine from S-methyl-5-thio-alpha-D-ribose 1-phosphate: step 1/6. Functionally, catalyzes the interconversion of methylthioribose-1-phosphate (MTR-1-P) into methylthioribulose-1-phosphate (MTRu-1-P). The chain is Methylthioribose-1-phosphate isomerase from Thermotoga neapolitana (strain ATCC 49049 / DSM 4359 / NBRC 107923 / NS-E).